We begin with the raw amino-acid sequence, 116 residues long: Ribosome-binding factor A (116 aa).

This sequence belongs to the RbfA family. As to quaternary structure, monomer. Binds 30S ribosomal subunits, but not 50S ribosomal subunits or 70S ribosomes.

It localises to the cytoplasm. In terms of biological role, one of several proteins that assist in the late maturation steps of the functional core of the 30S ribosomal subunit. Associates with free 30S ribosomal subunits (but not with 30S subunits that are part of 70S ribosomes or polysomes). Required for efficient processing of 16S rRNA. May interact with the 5'-terminal helix region of 16S rRNA. This Streptococcus pyogenes serotype M28 (strain MGAS6180) protein is Ribosome-binding factor A.